A 1070-amino-acid polypeptide reads, in one-letter code: [F-actin]-monooxygenase MICAL1 (1070 aa).

The tract at residues 1-489 (MASTISTNPA…RDLYDMEAKE (489 aa)) is monooxygenase domain. FAD is bound by residues Cys-95, 114–116 (EKR), 121–123 (RHN), Phe-181, Tyr-293, and Asp-393. Thr-475 bears the Phosphothreonine mark. Residues 508 to 612 (VGSQEELLRW…YLSHFHSAFK (105 aa)) enclose the Calponin-homology (CH) domain. The segment at 643 to 690 (QRTRTQENGEDAGGKKPRLEVKAETPSTEEPPVPKPDEPMTPPSQQQD) is disordered. Over residues 646 to 665 (RTQENGEDAGGKKPRLEVKA) the composition is skewed to basic and acidic residues. The span at 671–684 (EEPPVPKPDEPMTP) shows a compositional bias: pro residues. An LIM zinc-binding domain is found at 695-757 (DLCALCGQHL…LQHLPQTGHE (63 aa)). Residues Cys-697, Cys-700, His-718, Cys-721, Cys-724, Cys-727, Cys-747, and His-750 each coordinate Zn(2+). 2 disordered regions span residues 754–838 (TGHE…RSCS) and 865–887 (MEMG…EDVP). Basic and acidic residues predominate over residues 755–766 (GHEEDSSDRGPE). Over residues 770-781 (LPMSSENNTPSG) the composition is skewed to polar residues. Phosphoserine is present on residues Ser-793, Ser-875, and Ser-876. Over residues 876 to 887 (SEEETEEEEDVP) the composition is skewed to acidic residues. The tract at residues 904–1070 (GTMNNYPTWR…ELASEPGVQG (167 aa)) is important for interaction with RAB8A. One can recognise a bMERB domain in the interval 921–1070 (KEEEMKRFCK…ELASEPGVQG (150 aa)). The stretch at 928-1030 (FCKAQAIQRR…EETLKTAADR (103 aa)) forms a coiled coil. Ser-1060 carries the post-translational modification Phosphoserine.

The protein belongs to the Mical family. In terms of assembly, interacts with STK38 and STK38L. Associates with the SH3 domain of NEDD9. Interacts with VIM and PLXNA3. Interacts with RAB1B, RAB8A, RAB10, RAB13 and RAB15 (in their GTP-bound forms); binding to RAB1B is of low affinity compared to other Rab proteins; at least in case of RAB8A and RAB10 can bind 2 molecules of the Rab proteins simultaneously. Interacts with GRAF1/ARHGAP26, GRAF2/ARHGAP10, RAB8A, RAB8B and RAB10; may bind simultaneously to GRAFs and Rabs and connects GRAFs to Rabs. Does not interact with RAB1 and RAB11A. Requires FAD as cofactor.

Its subcellular location is the cytoplasm. It is found in the cytoskeleton. The protein localises to the endosome membrane. The protein resides in the midbody. It carries out the reaction L-methionyl-[F-actin] + NADPH + O2 + H(+) = L-methionyl-(R)-S-oxide-[F-actin] + NADP(+) + H2O. It catalyses the reaction NADPH + O2 + H(+) = H2O2 + NADP(+). Its function is as follows. Monooxygenase that promotes depolymerization of F-actin by mediating oxidation of specific methionine residues on actin to form methionine-sulfoxide, resulting in actin filament disassembly and preventing repolymerization. In the absence of actin, it also functions as a NADPH oxidase producing H(2)O(2). Acts as a cytoskeletal regulator that connects NEDD9 to intermediate filaments. Also acts as a negative regulator of apoptosis via its interaction with STK38 and STK38L; acts by antagonizing STK38 and STK38L activation by MST1/STK4. Involved in regulation of lamina-specific connectivity in the nervous system such as the development of lamina-restricted hippocampal connections. Through redox regulation of the actin cytoskeleton controls the intracellular distribution of secretory vesicles containing L1/neurofascin/NgCAM family proteins in neurons, thereby regulating their cell surface levels. May act as Rab effector protein and play a role in vesicle trafficking. Promotes endosomal tubule extension by associating with RAB8 (RAB8A or RAB8B), RAB10 and GRAF (GRAF1/ARHGAP26 or GRAF2/ARHGAP10) on the endosomal membrane which may connect GRAFs to Rabs, thereby participating in neosynthesized Rab8-Rab10-Rab11-dependent protein export. This is [F-actin]-monooxygenase MICAL1 (MICAL1) from Bos taurus (Bovine).